The chain runs to 1322 residues: Protein fantom (1322 aa).

A signal peptide spans 1–22 (MVSARYPIEKWSRPQLEDHFHN). Positions 15–89 (QLEDHFHNVV…MKLKAAKQQL (75 aa)) form a coiled coil. The segment covering 108–119 (RSTFRQPPSTFR) has biased composition (polar residues). 3 disordered regions span residues 108–151 (RSTF…GEKL), 189–275 (KSSV…PDQT), and 392–418 (RIEEEKISHSPPPMTFEPIRKRHSQSE). Over residues 195 to 217 (SSPPTRLSTSSSSKSSSSNNNND) the composition is skewed to low complexity. Positions 224–234 (ELEEMSEMSDD) are enriched in acidic residues. Residues 274-362 (QTEKVLLDKL…EDQKKFEAMR (89 aa)) adopt a coiled-coil conformation. A coiled-coil region spans residues 456–538 (ASENSLARWQ…FMLEEQIRTI (83 aa)). Disordered regions lie at residues 891 to 1094 (AELH…KPRN) and 1121 to 1149 (TDPLHFSVPPSESSSTSSPRRAEKAPVPL). Residues 918-927 (TDSSDTSFSH) are compositionally biased toward low complexity. A compositionally biased stretch (acidic residues) spans 956 to 975 (SDGEEEADRIVFDDDDDEIE). Over residues 984–996 (RDPEPLEVPERQV) the composition is skewed to basic and acidic residues. Polar residues predominate over residues 1015-1029 (NGTNESKESTPVTQR). Acidic residues predominate over residues 1042–1067 (PELEPESGPEPEPVVESEPNEVAETE). The span at 1068 to 1080 (EDRKRELKTEELK) shows a compositional bias: basic and acidic residues. Positions 1127 to 1139 (SVPPSESSSTSSP) are enriched in low complexity.

Belongs to the RPGRIP1 family. Expressed at the transition zone at the base of cilia. Expressed in ciliated sensory neurons, including the amphid neurons in the head.

Its subcellular location is the cell projection. The protein resides in the cilium. In terms of biological role, thought to have an important role in cilia formation and cilia-mediated chemosensation. Involved in the docking of other MKS/MKSR proteins localized to the transition zone of the cilia. This Caenorhabditis elegans protein is Protein fantom (mks-5).